The chain runs to 327 residues: Microtubule-associated protein RP/EB family member 2 (327 aa).

Residues 1-17 (MPGPTQTLSPNGENNND) are compositionally biased toward polar residues. Residues 1 to 20 (MPGPTQTLSPNGENNNDVIH) form a disordered region. Residues 56-158 (TMSRHDIIAW…FIQWFKKFFD (103 aa)) form the Calponin-homology (CH) domain. Disordered stretches follow at residues 170–238 (EARQ…DKDL) and 295–327 (LYSS…QEEY). Residues 234 to 304 (SDKDLETQVS…LYSSEEQESH (71 aa)) form the EB1 C-terminal domain.

This sequence belongs to the MAPRE family.

It localises to the cytoplasm. The protein resides in the cytoskeleton. Functionally, may be involved in microtubule polymerization, and spindle function by stabilizing microtubules and anchoring them at centrosomes. This chain is Microtubule-associated protein RP/EB family member 2 (mapre2), found in Xenopus laevis (African clawed frog).